We begin with the raw amino-acid sequence, 413 residues long: Alpha-1-antitrypsin 1-5 (413 aa).

Residues 1–24 (MTPSISWCLLLLAGLCCLVPSFLA) form the signal peptide. 3 N-linked (GlcNAc...) asparagine glycosylation sites follow: N64, N101, and N265. An RCL region spans residues 368–387 (AATVLQGGFLSMPPILHFNR).

It belongs to the serpin family.

The protein resides in the secreted. Functionally, does not inhibit elastase or chymotrypsin. No target protease has been identified to date. The protein is Alpha-1-antitrypsin 1-5 (Serpina1e) of Mus musculus (Mouse).